Reading from the N-terminus, the 117-residue chain is Small ribosomal subunit protein uS17 (117 aa).

The interval 1–42 (MMAEAKKAAPKKAATAASKDADAKGPKHTPPNPKVRGRRKTR) is disordered.

Belongs to the universal ribosomal protein uS17 family. As to quaternary structure, part of the 30S ribosomal subunit.

Functionally, one of the primary rRNA binding proteins, it binds specifically to the 5'-end of 16S ribosomal RNA. The protein is Small ribosomal subunit protein uS17 of Mycolicibacterium paratuberculosis (strain ATCC BAA-968 / K-10) (Mycobacterium paratuberculosis).